We begin with the raw amino-acid sequence, 371 residues long: Carnitine monooxygenase oxygenase subunit (371 aa).

The Rieske domain maps to 44–152 (WICVAHSSEL…VEEYAGFLFI (109 aa)). Residues Cys-86, His-88, Cys-106, and His-109 each coordinate [2Fe-2S] cluster. Residues His-208, His-213, and Asp-323 each contribute to the Fe cation site.

This sequence belongs to the bacterial ring-hydroxylating dioxygenase alpha subunit family. CntA subfamily. Composed of an oxygenase subunit (cntA) and a reductase subunit (cntB). [2Fe-2S] cluster is required as a cofactor. It depends on Fe cation as a cofactor.

It carries out the reaction (R)-carnitine + NADH + O2 + H(+) = (3R)-3-hydroxy-4-oxobutanoate + trimethylamine + NAD(+) + H2O. The enzyme catalyses (R)-carnitine + NADPH + O2 + H(+) = (3R)-3-hydroxy-4-oxobutanoate + trimethylamine + NADP(+) + H2O. Its pathway is amine and polyamine metabolism; carnitine metabolism. Functionally, converts carnitine to trimethylamine and malic semialdehyde. The sequence is that of Carnitine monooxygenase oxygenase subunit from Acinetobacter baumannii (strain ATCC 19606 / DSM 30007 / JCM 6841 / CCUG 19606 / CIP 70.34 / NBRC 109757 / NCIMB 12457 / NCTC 12156 / 81).